Here is a 154-residue protein sequence, read N- to C-terminus: Acidic phospholipase A2 2 (154 aa).

Residues 1 to 19 (MHPAHLLVPLGVCVSLLGA) form the signal peptide. Residues 20 to 27 (ARIPPLPL) constitute a propeptide that is removed on maturation. Intrachain disulfides connect cysteine 38–cysteine 104, cysteine 54–cysteine 153, cysteine 56–cysteine 72, cysteine 71–cysteine 132, cysteine 78–cysteine 125, cysteine 88–cysteine 118, and cysteine 111–cysteine 123. Ca(2+) is bound by residues tyrosine 55, glycine 57, and glycine 59. Residue histidine 75 is part of the active site. Aspartate 76 lines the Ca(2+) pocket. The active site involves aspartate 126.

This sequence belongs to the phospholipase A2 family. Group I subfamily. D49 sub-subfamily. In terms of assembly, monomer. Requires Ca(2+) as cofactor. In terms of tissue distribution, expressed by the venom gland.

The protein resides in the secreted. The catalysed reaction is a 1,2-diacyl-sn-glycero-3-phosphocholine + H2O = a 1-acyl-sn-glycero-3-phosphocholine + a fatty acid + H(+). Its function is as follows. Snake venom phospholipase A2 (PLA2) that shows moderate enzymatic activity and exhibits procoagulant activity. PLA2 catalyzes the calcium-dependent hydrolysis of the 2-acyl groups in 3-sn-phosphoglycerides. In Pseudonaja textilis (Eastern brown snake), this protein is Acidic phospholipase A2 2.